The primary structure comprises 494 residues: tRNA (guanine(37)-N(1))-methyltransferase (494 aa).

A mitochondrion-targeting transit peptide spans Met1–Thr32. S-adenosyl-L-methionine-binding positions include His278, Asp316–Leu317, Asp344–Gly345, and Asn377. The tract at residues Asp468–Ser494 is disordered.

The protein belongs to the class I-like SAM-binding methyltransferase superfamily. TRM5/TYW2 family. As to quaternary structure, monomer.

It is found in the mitochondrion matrix. The protein resides in the nucleus. Its subcellular location is the cytoplasm. The enzyme catalyses guanosine(37) in tRNA + S-adenosyl-L-methionine = N(1)-methylguanosine(37) in tRNA + S-adenosyl-L-homocysteine + H(+). Its function is as follows. Involved in mitochondrial tRNA methylation. Specifically methylates the N1 position of guanosine-37 in various tRNAs. Methylation is not dependent on the nature of the nucleoside 5' of the target nucleoside. This is the first step in the biosynthesis of wybutosine (yW), a modified base adjacent to the anticodon of tRNAs and required for accurate decoding. In Xenopus tropicalis (Western clawed frog), this protein is tRNA (guanine(37)-N(1))-methyltransferase (trmt5).